We begin with the raw amino-acid sequence, 361 residues long: D-alanine--D-alanine ligase (361 aa).

An ATP-grasp domain is found at 134 to 344 (KLLLKSFDIP…FKDLVDNLID (211 aa)). 167-222 (KEVLGYPVIVKPAVLGSSIGINVAYSENQIESFIKEALKYDLTIVIEKFIEAREIE) contributes to the ATP binding site. Residues aspartate 297, glutamate 311, and asparagine 313 each coordinate Mg(2+).

It belongs to the D-alanine--D-alanine ligase family. Mg(2+) serves as cofactor. It depends on Mn(2+) as a cofactor.

It is found in the cytoplasm. The catalysed reaction is 2 D-alanine + ATP = D-alanyl-D-alanine + ADP + phosphate + H(+). It participates in cell wall biogenesis; peptidoglycan biosynthesis. Its function is as follows. Cell wall formation. The chain is D-alanine--D-alanine ligase from Borreliella burgdorferi (strain ZS7) (Borrelia burgdorferi).